Here is a 117-residue protein sequence, read N- to C-terminus: Large ribosomal subunit protein bL20 (117 aa).

The protein belongs to the bacterial ribosomal protein bL20 family.

Binds directly to 23S ribosomal RNA and is necessary for the in vitro assembly process of the 50S ribosomal subunit. It is not involved in the protein synthesizing functions of that subunit. This chain is Large ribosomal subunit protein bL20, found in Neorickettsia sennetsu (strain ATCC VR-367 / Miyayama) (Ehrlichia sennetsu).